Here is a 663-residue protein sequence, read N- to C-terminus: MDRKYLANAIRALSMDGVQQANSGHPGAPMGMADIAEVLWRSHLNHNPSNPEWADRDRFVLSNGHGSMLIYSLLHLSGYELSIDDLKNFRQLHSKTPGHPEYGYAPGIETTTGPLGQGITNAVGMAMAEKALAAQFNKEGHDIVDHFTYVFMGDGCLMEGISHEACSLAGTLGLGKLIAFWDDNGISIDGHVEGWFSDDTPKRFEAYGWHVIPAVDGHDADAINAAIEAAKADPRPTLICTKTIIGFGSPNKSGSHDCHGAPLGAEEIAATRKELGWEHGPFEIPQEVYAEWSAKETGAAKEAAWNEKFAAYEAAYPELAAEFKRRVNGELPAEWEEKASQIIADLQANPANIASRKASQNALEAFGALLPEFMGGSADLAPSNLTMWSGSKSLEANDFSGNYIHYGVREFGMTAIMNGIALHGGFVPYGATFLMFMEYARNAMRMAALMKIQNIQVYTHDSIGLGEDGPTHQPVEQIASLRLTPNMNTWRPCDQVESAVAWKLAIERKDAPTALIFSRQNLAQQPRSAEQVADIAKGGYILKDSEGKPELILIATGSEVELAVKAAEQLTAEGKKVRVVSMPSTDAFDKQDADYREAVLPSDVTARIAIEAGIADFWYKYVGFDGRIIGMTTFGESAPADQLFEMFGFTVENVVNTAKELLA.

Substrate is bound at residue His-25. Residues His-65 and 113 to 115 (GPL) contribute to the thiamine diphosphate site. Mg(2+) is bound at residue Asp-154. Gly-155 and Asn-184 together coordinate thiamine diphosphate. Mg(2+)-binding residues include Asn-184 and Ile-186. His-259, Arg-356, and Ser-383 together coordinate substrate. His-259 serves as a coordination point for thiamine diphosphate. The active-site Proton donor is Glu-410. Phe-436 is a binding site for thiamine diphosphate. Substrate contacts are provided by His-460, Asp-468, and Arg-519.

The protein belongs to the transketolase family. As to quaternary structure, homodimer. Mg(2+) is required as a cofactor. The cofactor is Ca(2+). Requires Mn(2+) as cofactor. It depends on Co(2+) as a cofactor. Thiamine diphosphate serves as cofactor.

It catalyses the reaction D-sedoheptulose 7-phosphate + D-glyceraldehyde 3-phosphate = aldehydo-D-ribose 5-phosphate + D-xylulose 5-phosphate. Functionally, catalyzes the transfer of a two-carbon ketol group from a ketose donor to an aldose acceptor, via a covalent intermediate with the cofactor thiamine pyrophosphate. The polypeptide is Transketolase 2 (tkt2) (Vibrio parahaemolyticus serotype O3:K6 (strain RIMD 2210633)).